Reading from the N-terminus, the 144-residue chain is Large ribosomal subunit protein uL15 (144 aa).

The segment at 1–53 is disordered; it reads MRLNSLSPAEGAKHSAKRLGRGIGSGLGKTGGRGHKGQKSRTGGGVRRGFEGG. Residues 21 to 31 show a composition bias toward gly residues; the sequence is RGIGSGLGKTG.

The protein belongs to the universal ribosomal protein uL15 family. Part of the 50S ribosomal subunit.

Binds to the 23S rRNA. The protein is Large ribosomal subunit protein uL15 of Glaesserella parasuis serovar 5 (strain SH0165) (Haemophilus parasuis).